Reading from the N-terminus, the 475-residue chain is UDP-N-acetylmuramate--L-alanine ligase (475 aa).

An ATP-binding site is contributed by 118–124; the sequence is GTHGKTT.

This sequence belongs to the MurCDEF family.

The protein resides in the cytoplasm. The enzyme catalyses UDP-N-acetyl-alpha-D-muramate + L-alanine + ATP = UDP-N-acetyl-alpha-D-muramoyl-L-alanine + ADP + phosphate + H(+). The protein operates within cell wall biogenesis; peptidoglycan biosynthesis. Its function is as follows. Cell wall formation. This chain is UDP-N-acetylmuramate--L-alanine ligase, found in Thermosynechococcus vestitus (strain NIES-2133 / IAM M-273 / BP-1).